A 462-amino-acid chain; its full sequence is Chromosomal replication initiator protein DnaA (462 aa).

The segment at 1-84 (MAVSLWQQCI…RFDIGSRPSA (84 aa)) is domain I, interacts with DnaA modulators. The interval 84–125 (ARTVQPAPAAPRPTTGHTQTKARVGTAFNIQAEPMANANHRS) is domain II. The domain III, AAA+ region stretch occupies residues 126–342 (NINPTYQFDN…GALNRVIANA (217 aa)). Residues Gly170, Gly172, Lys173, and Thr174 each coordinate ATP. A domain IV, binds dsDNA region spans residues 343 to 462 (NFTGRPITID…YANLIRTLSS (120 aa)).

It belongs to the DnaA family. In terms of assembly, oligomerizes as a right-handed, spiral filament on DNA at oriC.

It is found in the cytoplasm. In terms of biological role, plays an essential role in the initiation and regulation of chromosomal replication. ATP-DnaA binds to the origin of replication (oriC) to initiate formation of the DNA replication initiation complex once per cell cycle. Binds the DnaA box (a 9 base pair repeat at the origin) and separates the double-stranded (ds)DNA. Forms a right-handed helical filament on oriC DNA; dsDNA binds to the exterior of the filament while single-stranded (ss)DNA is stabiized in the filament's interior. The ATP-DnaA-oriC complex binds and stabilizes one strand of the AT-rich DNA unwinding element (DUE), permitting loading of DNA polymerase. After initiation quickly degrades to an ADP-DnaA complex that is not apt for DNA replication. Binds acidic phospholipids. This Shewanella denitrificans (strain OS217 / ATCC BAA-1090 / DSM 15013) protein is Chromosomal replication initiator protein DnaA.